The sequence spans 207 residues: Guanylate kinase (207 aa).

Positions 5 to 184 constitute a Guanylate kinase-like domain; sequence GNLFIVSAPS…ALADLRAIIR (180 aa). 12–19 is a binding site for ATP; sequence APSGAGKS.

It belongs to the guanylate kinase family.

It localises to the cytoplasm. It catalyses the reaction GMP + ATP = GDP + ADP. Its function is as follows. Essential for recycling GMP and indirectly, cGMP. This is Guanylate kinase from Shewanella oneidensis (strain ATCC 700550 / JCM 31522 / CIP 106686 / LMG 19005 / NCIMB 14063 / MR-1).